Here is a 564-residue protein sequence, read N- to C-terminus: Adenine deaminase (564 aa).

This sequence belongs to the metallo-dependent hydrolases superfamily. Adenine deaminase family. The cofactor is Mn(2+).

It carries out the reaction adenine + H2O + H(+) = hypoxanthine + NH4(+). This Methylobacterium sp. (strain 4-46) protein is Adenine deaminase.